Here is a 306-residue protein sequence, read N- to C-terminus: Putative HTH-type transcriptional regulatory protein Mhun_2548 (306 aa).

In terms of domain architecture, HTH cro/C1-type spans 132-189 (LRELRETRSLSLGDLGQILGVSRRTVAKYEAGMGTTIEIALRIEETFDSGVIEPIDLI). Residues 143–162 (LGDLGQILGVSRRTVAKYEA) constitute a DNA-binding region (H-T-H motif).

This chain is Putative HTH-type transcriptional regulatory protein Mhun_2548, found in Methanospirillum hungatei JF-1 (strain ATCC 27890 / DSM 864 / NBRC 100397 / JF-1).